Here is a 242-residue protein sequence, read N- to C-terminus: Orotidine 5'-phosphate decarboxylase (242 aa).

Substrate is bound by residues Asp-16, Lys-37, 64-73, Thr-128, Arg-190, Gln-199, Gly-219, and Arg-220; that span reads DLKFHDIPNT. Lys-66 serves as the catalytic Proton donor.

It belongs to the OMP decarboxylase family. Type 1 subfamily. In terms of assembly, homodimer.

The enzyme catalyses orotidine 5'-phosphate + H(+) = UMP + CO2. It functions in the pathway pyrimidine metabolism; UMP biosynthesis via de novo pathway; UMP from orotate: step 2/2. Its function is as follows. Catalyzes the decarboxylation of orotidine 5'-monophosphate (OMP) to uridine 5'-monophosphate (UMP). The sequence is that of Orotidine 5'-phosphate decarboxylase from Prochlorococcus marinus (strain MIT 9312).